The chain runs to 312 residues: Taste receptor type 2 member 9 (312 aa).

Over 1–9 the chain is Extracellular; it reads MPSAIEAIY. A helical transmembrane segment spans residues 10 to 32; the sequence is IILIAGELTIGIWGNGFIVLVNC. The Cytoplasmic portion of the chain corresponds to 33 to 52; that stretch reads IDWLKRRDISLIDIILISLA. The chain crosses the membrane as a helical span at residues 53–72; that stretch reads ISRICLLCVISLDGFFMLLF. The Extracellular portion of the chain corresponds to 73–86; the sequence is PGTYGNSVLVSIVN. A helical transmembrane segment spans residues 87–109; the sequence is VVWTFANNSSLWFTSCLSIFYLL. Over 110-128 the chain is Cytoplasmic; the sequence is KIANISHPFFFWLKLKINK. The chain crosses the membrane as a helical span at residues 129 to 146; the sequence is VMLAILLGSFLISLIISV. Residues 147-180 are Extracellular-facing; sequence PKNDDMWYHLFKVSHEENITWKFKVSKIPGTFKQ. The N-linked (GlcNAc...) asparagine glycan is linked to Asn164. The chain crosses the membrane as a helical span at residues 181–203; that stretch reads LTLNLGVMVPFILCLISFFLLLF. The Cytoplasmic portion of the chain corresponds to 204-234; that stretch reads SLVRHTKQIRLHATGFRDPSTEAHMRAIKAV. The helical transmembrane segment at 235 to 257 threads the bilayer; sequence IIFLLLLIVYYPVFLVMTSSALI. The Extracellular portion of the chain corresponds to 258 to 261; the sequence is PQGK. A helical transmembrane segment spans residues 262–284; that stretch reads LVLMIGDIVTVIFPSSHSFILIM. Over 285–312 the chain is Cytoplasmic; it reads GNSKLREAFLKMLRFVKCFLRRRKPFVP.

Belongs to the G-protein coupled receptor T2R family. Expressed in subsets of taste receptor cells of the tongue and palate epithelium and exclusively in gustducin-positive cells.

It is found in the membrane. Functionally, gustducin-coupled receptor implicated in the perception of bitter compounds in the oral cavity and the gastrointestinal tract. Signals through PLCB2 and the calcium-regulated cation channel TRPM5. This chain is Taste receptor type 2 member 9 (TAS2R9), found in Homo sapiens (Human).